Reading from the N-terminus, the 551-residue chain is Chaperonin GroEL (551 aa).

ATP-binding positions include 30-33 (TLGP), Lys51, 87-91 (DGTTT), Gly415, 478-480 (NAA), and Asp494.

It belongs to the chaperonin (HSP60) family. In terms of assembly, forms a cylinder of 14 subunits composed of two heptameric rings stacked back-to-back. Interacts with the co-chaperonin GroES.

It localises to the cytoplasm. It catalyses the reaction ATP + H2O + a folded polypeptide = ADP + phosphate + an unfolded polypeptide.. Its function is as follows. Together with its co-chaperonin GroES, plays an essential role in assisting protein folding. The GroEL-GroES system forms a nano-cage that allows encapsulation of the non-native substrate proteins and provides a physical environment optimized to promote and accelerate protein folding. This chain is Chaperonin GroEL, found in Syntrophotalea carbinolica (strain DSM 2380 / NBRC 103641 / GraBd1) (Pelobacter carbinolicus).